We begin with the raw amino-acid sequence, 366 residues long: tRNA-specific 2-thiouridylase MnmA (366 aa).

Residues 6–13 and Leu-32 contribute to the ATP site; that span reads AMSGGVDS. The active-site Nucleophile is the Cys-101. Cys-101 and Cys-199 are oxidised to a cystine. ATP is bound at residue Gly-125. An interaction with tRNA region spans residues 148–150; that stretch reads KDQ. Cys-199 (cysteine persulfide intermediate) is an active-site residue.

The protein belongs to the MnmA/TRMU family.

The protein localises to the cytoplasm. The catalysed reaction is S-sulfanyl-L-cysteinyl-[protein] + uridine(34) in tRNA + AH2 + ATP = 2-thiouridine(34) in tRNA + L-cysteinyl-[protein] + A + AMP + diphosphate + H(+). Its function is as follows. Catalyzes the 2-thiolation of uridine at the wobble position (U34) of tRNA, leading to the formation of s(2)U34. In Leifsonia xyli subsp. xyli (strain CTCB07), this protein is tRNA-specific 2-thiouridylase MnmA.